The chain runs to 604 residues: Sulfite reductase [NADPH] flavoprotein alpha-component (604 aa).

Residues 65–203 (VTILYGSQTG…AAGQWHADVL (139 aa)) enclose the Flavodoxin-like domain. FMN-binding positions include 71-76 (SQTGNG), 118-121 (STHG), and 154-163 (LGDSSYEFFC). The 218-residue stretch at 236-453 (QNPYSAEVLV…VEPNKHFRLP (218 aa)) folds into the FAD-binding FR-type domain. FAD is bound by residues Thr324, Leu358, 392-395 (RLYS), 410-412 (TVA), and 425-428 (GGAS). NADP(+) contacts are provided by residues 524–525 (SR), 530–534 (KIYVQ), and Asp566. Residue Tyr604 coordinates FAD.

It belongs to the NADPH-dependent sulphite reductase flavoprotein subunit CysJ family. In the N-terminal section; belongs to the flavodoxin family. The protein in the C-terminal section; belongs to the flavoprotein pyridine nucleotide cytochrome reductase family. Alpha(8)-beta(8). The alpha component is a flavoprotein, the beta component is a hemoprotein. FAD is required as a cofactor. The cofactor is FMN.

The enzyme catalyses hydrogen sulfide + 3 NADP(+) + 3 H2O = sulfite + 3 NADPH + 4 H(+). Its pathway is sulfur metabolism; hydrogen sulfide biosynthesis; hydrogen sulfide from sulfite (NADPH route): step 1/1. In terms of biological role, component of the sulfite reductase complex that catalyzes the 6-electron reduction of sulfite to sulfide. This is one of several activities required for the biosynthesis of L-cysteine from sulfate. The flavoprotein component catalyzes the electron flow from NADPH -&gt; FAD -&gt; FMN to the hemoprotein component. This Shewanella sp. (strain MR-4) protein is Sulfite reductase [NADPH] flavoprotein alpha-component.